The sequence spans 147 residues: Transcriptional regulator FurA (147 aa).

Residues 1–85 are DNA-binding; that stretch reads MSSIPDYAEQ…GSVARYESRV (85 aa). Residues histidine 34 and glutamate 82 each contribute to the Zn(2+) site. The tract at residues 86–147 is dimerization; it reads GDNHHHIVCR…SISDTSRSHP (62 aa). Fe cation is bound by residues aspartate 87 and histidine 89. Zn(2+)-binding residues include histidine 91, cysteine 94, cysteine 97, and aspartate 102. Residue glutamate 109 coordinates Fe cation.

This sequence belongs to the Fur family. As to quaternary structure, homodimer.

It localises to the cytoplasm. Functionally, represses transcription of the catalase-peroxidase gene katG and its own transcription by binding to the promoter region in a redox-dependent manner. This is Transcriptional regulator FurA (furA) from Mycobacterium bovis (strain ATCC BAA-935 / AF2122/97).